The following is a 662-amino-acid chain: Glutathione hydrolase 7 (662 aa).

Over 1–106 the chain is Cytoplasmic; that stretch reads MAAENEASQE…AAECSCRQDG (106 aa). Residues Ser17, Ser72, Ser79, and Ser83 each carry the phosphoserine modification. The tract at residues 26 to 90 is disordered; it reads SFPRLPEDEP…DGSPLRETRK (65 aa). Over residues 72-83 the composition is skewed to low complexity; it reads SSSSEMGSQDGS. The helical; Signal-anchor for type II membrane protein transmembrane segment at 107 to 127 threads the bilayer; sequence LTVIVTACLTFATGVTVALVM. At 128 to 662 the chain is on the extracellular side; the sequence is QIYFGDPQIF…SLDATGASIL (535 aa). Asn198, Asn267, Asn283, Asn330, Asn353, Asn394, Asn519, Asn523, and Asn586 each carry an N-linked (GlcNAc...) asparagine glycan.

Belongs to the gamma-glutamyltransferase family. As to quaternary structure, heterodimer composed of the light and heavy chains. The active site is located in the light chain. Cleaved by autocatalysis into a large and a small subunit and the autocatalytic cleavage is essential to the functional activation of the enzyme.

It localises to the membrane. It catalyses the reaction an N-terminal (5-L-glutamyl)-[peptide] + an alpha-amino acid = 5-L-glutamyl amino acid + an N-terminal L-alpha-aminoacyl-[peptide]. The catalysed reaction is glutathione + H2O = L-cysteinylglycine + L-glutamate. The enzyme catalyses an S-substituted glutathione + H2O = an S-substituted L-cysteinylglycine + L-glutamate. Its pathway is sulfur metabolism; glutathione metabolism. Functionally, hydrolyzes and transfers gamma-glutamyl moieties from glutathione and other gamma-glutamyl compounds to acceptors. The chain is Glutathione hydrolase 7 from Rattus norvegicus (Rat).